Reading from the N-terminus, the 390-residue chain is Alkanesulfonate monooxygenase 1 (390 aa).

The tract at residues 364–390 (TGSSVNTGPFGETIAGDHRPKSLASAS) is disordered.

It belongs to the SsuD family.

It carries out the reaction an alkanesulfonate + FMNH2 + O2 = an aldehyde + FMN + sulfite + H2O + 2 H(+). Its function is as follows. Catalyzes the desulfonation of aliphatic sulfonates. This Mesorhizobium japonicum (strain LMG 29417 / CECT 9101 / MAFF 303099) (Mesorhizobium loti (strain MAFF 303099)) protein is Alkanesulfonate monooxygenase 1 (ssuD1).